The following is a 185-amino-acid chain: Ribonuclease M5 (185 aa).

The Toprim domain maps to 4-87 (KEIIVVEGKD…AFLPKEEALA (84 aa)). Glutamate 10, aspartate 56, and aspartate 58 together coordinate Mg(2+).

This sequence belongs to the ribonuclease M5 family. Requires Mg(2+) as cofactor.

The protein resides in the cytoplasm. The catalysed reaction is Endonucleolytic cleavage of RNA, removing 21 and 42 nucleotides, respectively, from the 5'- and 3'-termini of a 5S-rRNA precursor.. Its function is as follows. Required for correct processing of both the 5' and 3' ends of 5S rRNA precursor. Cleaves both sides of a double-stranded region yielding mature 5S rRNA in one step. This is Ribonuclease M5 from Bacillus anthracis.